The chain runs to 74 residues: Translation initiation factor IF-1 (74 aa).

The S1-like domain maps to 1 to 72 (MAKETEMEFE…TRGRITYRKI (72 aa)).

This sequence belongs to the IF-1 family. Component of the 30S ribosomal translation pre-initiation complex which assembles on the 30S ribosome in the order IF-2 and IF-3, IF-1 and N-formylmethionyl-tRNA(fMet); mRNA recruitment can occur at any time during PIC assembly.

It is found in the cytoplasm. Its function is as follows. One of the essential components for the initiation of protein synthesis. Stabilizes the binding of IF-2 and IF-3 on the 30S subunit to which N-formylmethionyl-tRNA(fMet) subsequently binds. Helps modulate mRNA selection, yielding the 30S pre-initiation complex (PIC). Upon addition of the 50S ribosomal subunit IF-1, IF-2 and IF-3 are released leaving the mature 70S translation initiation complex. This Mycoplasma capricolum subsp. capricolum (strain California kid / ATCC 27343 / NCTC 10154) protein is Translation initiation factor IF-1.